A 139-amino-acid chain; its full sequence is Dehydrin DHN1 (139 aa).

Residues M1–H139 are disordered. Residues G23 to G42 are compositionally biased toward gly residues. Residues R49–L58 are compositionally biased toward basic and acidic residues. A compositionally biased stretch (low complexity) spans R59 to S68. Residues K83–A98 show a composition bias toward basic and acidic residues. A compositionally biased stretch (low complexity) spans A99–G109. The segment covering T120–H139 has biased composition (basic and acidic residues).

The protein belongs to the plant dehydrin family.

This is Dehydrin DHN1 (DHN1) from Hordeum vulgare (Barley).